We begin with the raw amino-acid sequence, 394 residues long: Elongation factor Tu (394 aa).

A tr-type G domain is found at 10 to 204 (KPHINVGTIG…ALDKYIPEPQ (195 aa)). The segment at 19–26 (GHVDHGKT) is G1. Residue 19 to 26 (GHVDHGKT) coordinates GTP. Residue T26 participates in Mg(2+) binding. The G2 stretch occupies residues 60–64 (GITIN). A G3 region spans residues 81–84 (DCPG). GTP contacts are provided by residues 81–85 (DCPGH) and 136–139 (NKCD). A G4 region spans residues 136-139 (NKCD). Positions 174–176 (SAL) are G5.

It belongs to the TRAFAC class translation factor GTPase superfamily. Classic translation factor GTPase family. EF-Tu/EF-1A subfamily. Monomer.

It localises to the cytoplasm. It carries out the reaction GTP + H2O = GDP + phosphate + H(+). Its function is as follows. GTP hydrolase that promotes the GTP-dependent binding of aminoacyl-tRNA to the A-site of ribosomes during protein biosynthesis. The polypeptide is Elongation factor Tu (Hamiltonella defensa subsp. Acyrthosiphon pisum (strain 5AT)).